The following is a 1265-amino-acid chain: Dynactin subunit 1 (1265 aa).

The CAP-Gly domain maps to 27-69; that stretch reads GMTSFAVGKWVGVVLDEPKGKNSGSIKGQQYFQCDENCGMFVR. Residues 81–179 form a disordered region; it reads GSRRSIEDVS…GNGAASHASS (99 aa). Residues Ser85, Ser110, Ser114, Ser117, and Ser121 each carry the phosphoserine modification. Low complexity-rich tracts occupy residues 103–138 and 161–177; these read RLSS…SSSS and AEGA…ASHA. The residue at position 183 (Ser183) is a Phosphoserine. 3 coiled-coil regions span residues 213-570, 812-836, and 967-1084; these read NSGA…ESLQ, LIQF…RLPS, and QRAQ…NSTT. The segment at 1082 to 1106 is disordered; that stretch reads STTGKVQPGSESHSPHNISLSGNTS. Ser1117 is modified (phosphoserine). Residues 1128–1160 are a coiled coil; the sequence is EEVELLKNAFNQERNQRLRLQAQDMRAKLSQFE.

Belongs to the dynactin 150 kDa subunit family. As to quaternary structure, monomer and homodimer. Subunit of dynactin, a multiprotein complex part of a tripartite complex with dynein and a adapter, such as BICDL1, BICD2 or HOOK3. The dynactin complex is built around ACTR1A/ACTB filament and consists of an actin-related filament composed of a shoulder domain, a pointed end and a barbed end. Its length is defined by its flexible shoulder domain. The soulder is composed of 2 DCTN1 subunits, 4 DCTN2 and 2 DCTN3. DCTN1/p150(glued) binds directly to microtubules and to cytoplasmic dynein.

It is found in the cytoplasm. Its subcellular location is the cytoskeleton. Functionally, part of the dynactin complex that activates the molecular motor dynein for ultra-processive transport along microtubules. Plays a key role in dynein-mediated retrograde transport of vesicles and organelles along microtubules by recruiting and tethering dynein to microtubules. Binds to both dynein and microtubules providing a link between specific cargos, microtubules and dynein. Essential for targeting dynein to microtubule plus ends, recruiting dynein to membranous cargos and enhancing dynein processivity (the ability to move along a microtubule for a long distance without falling off the track). Can also act as a brake to slow the dynein motor during motility along the microtubule. Can regulate microtubule stability by promoting microtubule formation, nucleation and polymerization and by inhibiting microtubule catastrophe in neurons. Inhibits microtubule catastrophe by binding both to microtubules and to tubulin, leading to enhanced microtubule stability along the axon. Plays a role in metaphase spindle orientation. Plays a role in centriole cohesion and subdistal appendage organization and function. Its recruitment to the centriole in a KIF3A-dependent manner is essential for the maintenance of centriole cohesion and the formation of subdistal appendage. Also required for microtubule anchoring at the mother centriole. Plays a role in primary cilia formation. This chain is Dynactin subunit 1, found in Drosophila melanogaster (Fruit fly).